The primary structure comprises 382 residues: Ribosomal RNA large subunit methyltransferase G (382 aa).

It belongs to the methyltransferase superfamily. RlmG family.

It is found in the cytoplasm. It carries out the reaction guanosine(1835) in 23S rRNA + S-adenosyl-L-methionine = N(2)-methylguanosine(1835) in 23S rRNA + S-adenosyl-L-homocysteine + H(+). Functionally, specifically methylates the guanine in position 1835 (m2G1835) of 23S rRNA. The sequence is that of Ribosomal RNA large subunit methyltransferase G from Pseudoalteromonas translucida (strain TAC 125).